We begin with the raw amino-acid sequence, 346 residues long: NADH-ubiquinone oxidoreductase chain 2 (346 aa).

The next 11 helical transmembrane spans lie at 1–21, 25–45, 60–80, 96–116, 124–144, 149–169, 178–198, 200–220, 242–262, 274–294, and 325–345; these read MNPH…TITI, HWIM…PLIS, FLVQ…NAWA, MLLT…FWFP, LTTA…ILLM, LNPT…GWMG, ILAF…IYNP, LTLL…LSLN, AALM…GFMP, EMTT…FFYL, and IAIL…ILAA.

Belongs to the complex I subunit 2 family.

The protein resides in the mitochondrion inner membrane. It catalyses the reaction a ubiquinone + NADH + 5 H(+)(in) = a ubiquinol + NAD(+) + 4 H(+)(out). In terms of biological role, core subunit of the mitochondrial membrane respiratory chain NADH dehydrogenase (Complex I) that is believed to belong to the minimal assembly required for catalysis. Complex I functions in the transfer of electrons from NADH to the respiratory chain. The immediate electron acceptor for the enzyme is believed to be ubiquinone. The protein is NADH-ubiquinone oxidoreductase chain 2 (MT-ND2) of Struthio camelus (Common ostrich).